Reading from the N-terminus, the 334-residue chain is Holliday junction branch migration complex subunit RuvB (334 aa).

A large ATPase domain (RuvB-L) region spans residues 4–184 (ADRLISAAVI…FGIVQRLEFY (181 aa)). Residues I23, R24, G65, K68, T69, T70, 131-133 (EDY), R174, Y184, and R221 each bind ATP. T69 is a Mg(2+) binding site. Residues 185–255 (PVADLEHIVS…VAMKALDMLN (71 aa)) are small ATPAse domain (RuvB-S). The segment at 258 to 334 (AEGFDFMDRK…YKHFGITREE (77 aa)) is head domain (RuvB-H). Residues R294, R313, and R318 each coordinate DNA.

It belongs to the RuvB family. Homohexamer. Forms an RuvA(8)-RuvB(12)-Holliday junction (HJ) complex. HJ DNA is sandwiched between 2 RuvA tetramers; dsDNA enters through RuvA and exits via RuvB. An RuvB hexamer assembles on each DNA strand where it exits the tetramer. Each RuvB hexamer is contacted by two RuvA subunits (via domain III) on 2 adjacent RuvB subunits; this complex drives branch migration. In the full resolvosome a probable DNA-RuvA(4)-RuvB(12)-RuvC(2) complex forms which resolves the HJ.

The protein localises to the cytoplasm. It carries out the reaction ATP + H2O = ADP + phosphate + H(+). Functionally, the RuvA-RuvB-RuvC complex processes Holliday junction (HJ) DNA during genetic recombination and DNA repair, while the RuvA-RuvB complex plays an important role in the rescue of blocked DNA replication forks via replication fork reversal (RFR). RuvA specifically binds to HJ cruciform DNA, conferring on it an open structure. The RuvB hexamer acts as an ATP-dependent pump, pulling dsDNA into and through the RuvAB complex. RuvB forms 2 homohexamers on either side of HJ DNA bound by 1 or 2 RuvA tetramers; 4 subunits per hexamer contact DNA at a time. Coordinated motions by a converter formed by DNA-disengaged RuvB subunits stimulates ATP hydrolysis and nucleotide exchange. Immobilization of the converter enables RuvB to convert the ATP-contained energy into a lever motion, pulling 2 nucleotides of DNA out of the RuvA tetramer per ATP hydrolyzed, thus driving DNA branch migration. The RuvB motors rotate together with the DNA substrate, which together with the progressing nucleotide cycle form the mechanistic basis for DNA recombination by continuous HJ branch migration. Branch migration allows RuvC to scan DNA until it finds its consensus sequence, where it cleaves and resolves cruciform DNA. The protein is Holliday junction branch migration complex subunit RuvB of Yersinia pestis bv. Antiqua (strain Angola).